We begin with the raw amino-acid sequence, 296 residues long: Peptide transport system permease protein SapC (296 aa).

Topologically, residues 1–28 (MPYDSVYSEKRPPGTLRTAWRKFYSDAS) are cytoplasmic. A helical transmembrane segment spans residues 29-49 (AMVGLYGCAGLAVLCIFGGWF). At 50–98 (APYGIDQQFLGYQLLPPSWSRYGEVSFFLGTDDLGRDVLSRLLSGAAPT) the chain is on the periplasmic side. Residues 99–119 (VGGAFVVTLAATICGLVLGTF) form a helical membrane-spanning segment. The ABC transmembrane type-1 domain maps to 99-284 (VGGAFVVTLA…ISVLLVNLLG (186 aa)). The Cytoplasmic segment spans residues 120-133 (AGATHGLRSAVLNH). A helical membrane pass occupies residues 134–154 (ILDTLLAIPSLLLAIIVVAFA). Residues 155–196 (GPSLSHAMFAVWLALLPRMVRSIYSMVHDELEKEYVIAARLD) are Periplasmic-facing. A helical membrane pass occupies residues 197–217 (GASTLNILWFAVMPNITAGLV). The Cytoplasmic portion of the chain corresponds to 218–222 (TEITR). Residues 223–243 (ALSMAILDIAALGFLDLGAQL) traverse the membrane as a helical segment. At 244-257 (PSPEWGAMLGDALE) the chain is on the periplasmic side. The helical transmembrane segment at 258 to 278 (LIYVAPWTVMLPGAAIMISVL) threads the bilayer. Topologically, residues 279 to 296 (LVNLLGDGVRRAIIAGVE) are cytoplasmic.

The protein belongs to the binding-protein-dependent transport system permease family. OppBC subfamily.

It localises to the cell inner membrane. Involved in a peptide intake transport system that plays a role in the resistance to antimicrobial peptides. This is Peptide transport system permease protein SapC (sapC) from Escherichia coli O6:H1 (strain CFT073 / ATCC 700928 / UPEC).